The primary structure comprises 1521 residues: Probable DNA topoisomerase 2 (1521 aa).

Positions 1 to 10 (MSDSENDYSD) are enriched in acidic residues. The disordered stretch occupies residues 1–87 (MSDSENDYSD…DDKSSSSDNE (87 aa)). Residues 36–48 (SKKKASATRKPAA) are compositionally biased toward basic residues. The span at 49–62 (KKATTTTTSTTKKS) shows a compositional bias: low complexity. ATP contacts are provided by residues N163, N192, 220–222 (SSH), and 233–240 (GRNGFGAK). Positions 412–414 (NKK) are interaction with DNA. An ATP-binding site is contributed by 446 to 448 (QTK). Residues 527–640 (CTLILTEGDS…TLLRMPGFLV (114 aa)) form the Toprim domain. Mg(2+) contacts are provided by E533, D609, and D611. The 503-residue stretch at 771–1273 (IPNIVDGLKT…PIQEIYKRDL (503 aa)) folds into the Topo IIA-type catalytic domain. The active-site O-(5'-phospho-DNA)-tyrosine intermediate is Y861. The tract at residues 1007 to 1047 (GTRKKKKEEKEKKAASRKGTKAKPTTTKRSKRVDDDDDNEK) is disordered. Residues 1021–1037 (ASRKGTKAKPTTTKRSK) are compositionally biased toward basic residues. The tract at residues 1085-1094 (KLVSTINETN) is interaction with DNA. Disordered regions lie at residues 1192–1222 (KIKKKKNAFDEEDAAISSDEEKDGAQEEQDD) and 1335–1521 (IPTT…SDSD). The span at 1201 to 1222 (DEEDAAISSDEEKDGAQEEQDD) shows a compositional bias: acidic residues. Positions 1354-1368 (TTSTSTSTTTSSNTK) are enriched in low complexity. A compositionally biased stretch (acidic residues) spans 1422 to 1438 (LSDESDQESDQESDQGS). Residues 1454-1467 (PTTIATKKATTSKS) are compositionally biased toward low complexity. The span at 1468–1480 (KVIDDKSSDDEVI) shows a compositional bias: basic and acidic residues. Acidic residues predominate over residues 1503-1521 (SDSDDDDLYDNEESSSDSD).

The protein belongs to the type II topoisomerase family. Homodimer. Mg(2+) is required as a cofactor. Requires Mn(2+) as cofactor. Ca(2+) serves as cofactor.

The protein localises to the nucleus. It carries out the reaction ATP-dependent breakage, passage and rejoining of double-stranded DNA.. Functionally, control of topological states of DNA by transient breakage and subsequent rejoining of DNA strands. Topoisomerase II makes double-strand breaks. The polypeptide is Probable DNA topoisomerase 2 (top2) (Dictyostelium discoideum (Social amoeba)).